The primary structure comprises 202 residues: Holliday junction branch migration complex subunit RuvA (202 aa).

The tract at residues 1–63 (MIASLRGTVL…EDSMTLYGFT (63 aa)) is domain I. Residues 64-142 (SQDDRDMFHV…AFAPAESADL (79 aa)) form a domain II region. A flexible linker region spans residues 143–148 (SSAAPA). The segment at 149–202 (AAGPVVEDVVEALIGLGFTDKMARPVVESVVAEQPDAATPVVLRAALSQLGAKK) is domain III.

It belongs to the RuvA family. In terms of assembly, homotetramer. Forms an RuvA(8)-RuvB(12)-Holliday junction (HJ) complex. HJ DNA is sandwiched between 2 RuvA tetramers; dsDNA enters through RuvA and exits via RuvB. An RuvB hexamer assembles on each DNA strand where it exits the tetramer. Each RuvB hexamer is contacted by two RuvA subunits (via domain III) on 2 adjacent RuvB subunits; this complex drives branch migration. In the full resolvosome a probable DNA-RuvA(4)-RuvB(12)-RuvC(2) complex forms which resolves the HJ.

Its subcellular location is the cytoplasm. The RuvA-RuvB-RuvC complex processes Holliday junction (HJ) DNA during genetic recombination and DNA repair, while the RuvA-RuvB complex plays an important role in the rescue of blocked DNA replication forks via replication fork reversal (RFR). RuvA specifically binds to HJ cruciform DNA, conferring on it an open structure. The RuvB hexamer acts as an ATP-dependent pump, pulling dsDNA into and through the RuvAB complex. HJ branch migration allows RuvC to scan DNA until it finds its consensus sequence, where it cleaves and resolves the cruciform DNA. In Corynebacterium aurimucosum (strain ATCC 700975 / DSM 44827 / CIP 107346 / CN-1) (Corynebacterium nigricans), this protein is Holliday junction branch migration complex subunit RuvA.